Consider the following 666-residue polypeptide: Protein OS-9 (666 aa).

The N-terminal stretch at 1 to 30 is a signal peptide; it reads MAAEALLSSLLGLLFLGLLLPAHLTGGVGS. An MRH domain is found at 108–230; sequence APCLLKTKDW…SIRTSRLCPH (123 aa). C110 and C123 are joined by a disulfide. The a mannooligosaccharide derivative site is built by W117, W118, and Q130. A glycan (N-linked (GlcNAc...) asparagine) is linked at N177. 2 cysteine pairs are disulfide-bonded: C181/C216 and C196/C228. A mannooligosaccharide derivative-binding residues include D182, R188, E212, and Y218. Disordered stretches follow at residues 261-356, 370-449, 505-540, and 631-666; these read RQAE…NVQV, EELK…SDRE, ESQSPELVQKYKKRRVVPQKPPPSPHPTEEEPEHRV, and EANKERQRQSELESNYRRVWGSPGGEDTGDLDEFDF. Basic and acidic residues-rich tracts occupy residues 263 to 281 and 294 to 310; these read AESKQHEEKVTEEVQDTDH and PKKEDVSPTKEDKESEF. The segment covering 320–332 has biased composition (low complexity); that stretch reads QATGTEEAQAGEQ. Basic and acidic residues-rich tracts occupy residues 370-379 and 395-412; these read EELKGAEKGK and PQREAEAKGKGGEPRGLV. The span at 413 to 429 shows a compositional bias: acidic residues; the sequence is EEEDGDEEEEDEDEDEQ. Over residues 434–449 the composition is skewed to basic and acidic residues; the sequence is EFEKELEGMLLPSDRE. Positions 631–646 are enriched in basic and acidic residues; sequence EANKERQRQSELESNY. Positions 657–666 are enriched in acidic residues; the sequence is DTGDLDEFDF.

Belongs to the OS-9 family. In terms of assembly, component of the HRD1 complex, which comprises at least SYNV1/HRD1, DERL1/2, FAM8A1, HERPUD1/HERP, OS9, SEL1L and UBE2J1. FAM8A1 is stabilized by interaction with SYNV1, which prevents its proteasomal degradation. OS9 and UBE2J1 recruitment to the complex may be mediated by SEL1L. Through this complex, may interact with ERLEC1 and HSPA5. Interacts (via C-terminus) with CPNE6 (via second C2 domain); this interaction occurs in a calcium-dependent manner in vitro. Interacts with CREB3. In terms of processing, intramolecular disulfide bonds.

It localises to the endoplasmic reticulum lumen. Its function is as follows. Lectin component of the HRD1 complex, which functions in endoplasmic reticulum (ER) quality control and ER-associated degradation (ERAD). Specifically recognizes and binds improperly folded glycoproteins as well as hyperglycosylated proteins, retain them in the ER, and transfers them to the ubiquitination machinery and promote their degradation. Possible targets include TRPV4 as well as hyperglycosylated HSP90B1. The polypeptide is Protein OS-9 (Os9) (Rattus norvegicus (Rat)).